Consider the following 138-residue polypeptide: DNA-directed RNA polymerase subunit omega (138 aa).

A disordered region spans residues 104-138 (GNSDGLENSSNSRDDNPLGRDNFFSTPENRNNTNS). The span at 126-138 (FFSTPENRNNTNS) shows a compositional bias: polar residues.

Belongs to the RNA polymerase subunit omega family. The RNAP catalytic core consists of 2 alpha, 1 beta, 1 beta' and 1 omega subunit. When a sigma factor is associated with the core the holoenzyme is formed, which can initiate transcription.

It carries out the reaction RNA(n) + a ribonucleoside 5'-triphosphate = RNA(n+1) + diphosphate. In terms of biological role, promotes RNA polymerase assembly. Latches the N- and C-terminal regions of the beta' subunit thereby facilitating its interaction with the beta and alpha subunits. This Ehrlichia chaffeensis (strain ATCC CRL-10679 / Arkansas) protein is DNA-directed RNA polymerase subunit omega.